Reading from the N-terminus, the 319-residue chain is NAP1-binding protein (319 aa).

The segment covering 34–43 has biased composition (basic residues); that stretch reads SALRSRRKQM. Positions 34-74 are disordered; that stretch reads SALRSRRKQMRPTGKSVLKRPRKVTDRKTEEKIRTNRRKTP. Residues 56–67 show a composition bias toward basic and acidic residues; the sequence is KVTDRKTEEKIR. Residues S251 and S260 each carry the phosphoserine modification. The interval 278-319 is disordered; it reads EMQPLQENISPACPTPPYRSRETEKEDETLSPISVDFSSYLS.

In terms of assembly, interacts with NDC1 and MPS2.

The sequence is that of NAP1-binding protein (NBP1) from Saccharomyces cerevisiae (strain ATCC 204508 / S288c) (Baker's yeast).